The sequence spans 97 residues: Glutamyl-tRNA(Gln) amidotransferase subunit C (97 aa).

Belongs to the GatC family. As to quaternary structure, heterotrimer of A, B and C subunits.

The catalysed reaction is L-glutamyl-tRNA(Gln) + L-glutamine + ATP + H2O = L-glutaminyl-tRNA(Gln) + L-glutamate + ADP + phosphate + H(+). It catalyses the reaction L-aspartyl-tRNA(Asn) + L-glutamine + ATP + H2O = L-asparaginyl-tRNA(Asn) + L-glutamate + ADP + phosphate + 2 H(+). In terms of biological role, allows the formation of correctly charged Asn-tRNA(Asn) or Gln-tRNA(Gln) through the transamidation of misacylated Asp-tRNA(Asn) or Glu-tRNA(Gln) in organisms which lack either or both of asparaginyl-tRNA or glutaminyl-tRNA synthetases. The reaction takes place in the presence of glutamine and ATP through an activated phospho-Asp-tRNA(Asn) or phospho-Glu-tRNA(Gln). The chain is Glutamyl-tRNA(Gln) amidotransferase subunit C from Saccharolobus solfataricus (strain ATCC 35092 / DSM 1617 / JCM 11322 / P2) (Sulfolobus solfataricus).